Here is a 400-residue protein sequence, read N- to C-terminus: Apolipoprotein N-acyltransferase (400 aa).

5 consecutive transmembrane segments (helical) span residues 16-36, 42-62, 67-87, 97-117, and 123-143; these read AISP…VLFV, FGVG…GLRY, FLIP…FYIG, FAFL…IVPE, and SYIG…WILF. Residues 181–400 form the CN hydrolase domain; sequence AQSAVSQDFD…AIITPFVSSR (220 aa). The active-site Proton acceptor is Glu-222. Lys-283 is a catalytic residue. Cys-332 serves as the catalytic Nucleophile. Residues 377–397 form a helical membrane-spanning segment; it reads YGSVIFHATNLSPAAIITPFV.

This sequence belongs to the CN hydrolase family. Apolipoprotein N-acyltransferase subfamily.

The protein resides in the cell inner membrane. The enzyme catalyses N-terminal S-1,2-diacyl-sn-glyceryl-L-cysteinyl-[lipoprotein] + a glycerophospholipid = N-acyl-S-1,2-diacyl-sn-glyceryl-L-cysteinyl-[lipoprotein] + a 2-acyl-sn-glycero-3-phospholipid + H(+). It functions in the pathway protein modification; lipoprotein biosynthesis (N-acyl transfer). In terms of biological role, catalyzes the phospholipid dependent N-acylation of the N-terminal cysteine of apolipoprotein, the last step in lipoprotein maturation. The polypeptide is Apolipoprotein N-acyltransferase (Helicobacter hepaticus (strain ATCC 51449 / 3B1)).